We begin with the raw amino-acid sequence, 127 residues long: MORF4 family-associated protein 1-like 1 (127 aa).

Positions 87–118 form a coiled coil; that stretch reads GEADERVSELCEKAEEKAKEIAKMAEMLVELV.

This sequence belongs to the MORF4 family-associated protein family.

The protein is MORF4 family-associated protein 1-like 1 (MRFAP1L1) of Homo sapiens (Human).